A 154-amino-acid chain; its full sequence is Myoglobin (154 aa).

Positions 2–148 (GLSDDEWNHV…FRNDMASKYK (147 aa)) constitute a Globin domain. Nitrite is bound at residue histidine 65. Histidine 65 is an O2 binding site. Heme b is bound at residue histidine 94.

The protein belongs to the globin family. Monomeric.

The protein resides in the cytoplasm. The protein localises to the sarcoplasm. It carries out the reaction Fe(III)-heme b-[protein] + nitric oxide + H2O = Fe(II)-heme b-[protein] + nitrite + 2 H(+). It catalyses the reaction H2O2 + AH2 = A + 2 H2O. Monomeric heme protein which primary function is to store oxygen and facilitate its diffusion within muscle tissues. Reversibly binds oxygen through a pentacoordinated heme iron and enables its timely and efficient release as needed during periods of heightened demand. Depending on the oxidative conditions of tissues and cells, and in addition to its ability to bind oxygen, it also has a nitrite reductase activity whereby it regulates the production of bioactive nitric oxide. Under stress conditions, like hypoxia and anoxia, it also protects cells against reactive oxygen species thanks to its pseudoperoxidase activity. The polypeptide is Myoglobin (MB) (Caretta caretta (Loggerhead sea turtle)).